The primary structure comprises 228 residues: Ribosomal RNA small subunit methyltransferase G (228 aa).

Residues Gly82, Leu87, 105 to 107, 133 to 134, and Arg147 each bind S-adenosyl-L-methionine; these read DAT and VE.

This sequence belongs to the methyltransferase superfamily. RNA methyltransferase RsmG family.

It is found in the cytoplasm. Functionally, specifically methylates the N7 position of a guanine in 16S rRNA. The protein is Ribosomal RNA small subunit methyltransferase G of Pelodictyon phaeoclathratiforme (strain DSM 5477 / BU-1).